The chain runs to 589 residues: MTTASATPQQMRDRLLQAIDSHSNICNMVAVLDVITNLEKYPITKEALEETRLGKLINDVRKKTKDEDLAKRAKKLLRNWQKLIEPGQGDTPVRGPPNVPGSANGGAHPCRTDTPPAVPPPSKVAPELKTRNDIHNTYSPKAEKSSSRKRRAEQRDSPHLPAKMSKTSLYEPVYSSSPPSNGIRGTPEPLLEKDDEVPSDRIRLEHLDNDRHNKIPVNAVKPHPSSPGLTKLPSTSSLLKASVLQQARVDSGGQHQPKSPRYSSSPRSATHETMAKRSTTYAPKGTLSSPSLNSAQVPSPLPTLQPLTSPAQVCISDGPSSVGLEGSLHLHRSSDRVSQPPHSTATLEPLSGALLATHGLEGLETKAEREGASSNSDGKKRKKYRPRDYTVNLQGQSSEDRTKPRLKERRLTFDPVTGQIKPLTPKESHQEEECHGQPIPEPSVRTDIPQQKPPTSVPNPFQQTNWKELSRNEIIQSYLNLQSNVLTSSGAQTHGAHFFMTEYLKREEHDVKEPRKMHVLAPGSSTTELPGVSRDVTNEDLLRIHNEHWPGVNGCYDTKGAWFDWTDCISLDPHGDESKLNILPYVCLD.

Positions 10-87 (QMRDRLLQAI…RNWQKLIEPG (78 aa)) constitute a TFIIS N-terminal domain. Disordered stretches follow at residues 83–233 (LIEP…TKLP), 247–320 (ARVD…DGPS), and 363–441 (LETK…PIPE). A compositionally biased stretch (basic and acidic residues) spans 190–213 (LLEKDDEVPSDRIRLEHLDNDRHN). Over residues 259 to 268 (SPRYSSSPRS) the composition is skewed to low complexity. Polar residues predominate over residues 276 to 297 (KRSTTYAPKGTLSSPSLNSAQV). Composition is skewed to basic and acidic residues over residues 398–412 (SEDR…RRLT) and 424–435 (TPKESHQEEECH).

The protein belongs to the Mediator complex subunit 26 family. Component of the Mediator complex.

The protein localises to the nucleus. Functionally, component of the Mediator complex, a coactivator involved in the regulated transcription of nearly all RNA polymerase II-dependent genes. Mediator functions as a bridge to convey information from gene-specific regulatory proteins to the basal RNA polymerase II transcription machinery. Mediator is recruited to promoters by direct interactions with regulatory proteins and serves as a scaffold for the assembly of a functional preinitiation complex with RNA polymerase II and the general transcription factors. In Danio rerio (Zebrafish), this protein is Mediator of RNA polymerase II transcription subunit 26 (med26).